Here is a 345-residue protein sequence, read N- to C-terminus: Heat-inducible transcription repressor HrcA (345 aa).

Belongs to the HrcA family.

Its function is as follows. Negative regulator of class I heat shock genes (grpE-dnaK-dnaJ and groELS operons). Prevents heat-shock induction of these operons. The sequence is that of Heat-inducible transcription repressor HrcA from Dehalococcoides mccartyi (strain ATCC BAA-2266 / KCTC 15142 / 195) (Dehalococcoides ethenogenes (strain 195)).